The following is a 638-amino-acid chain: 1-deoxy-D-xylulose-5-phosphate synthase (638 aa).

Residues His76 and 117 to 119 (AHS) contribute to the thiamine diphosphate site. A Mg(2+)-binding site is contributed by Asp148. Residues 149–150 (GS), Asn177, Tyr287, and Glu369 contribute to the thiamine diphosphate site. Asn177 serves as a coordination point for Mg(2+).

This sequence belongs to the transketolase family. DXPS subfamily. Homodimer. Mg(2+) is required as a cofactor. The cofactor is thiamine diphosphate.

It carries out the reaction D-glyceraldehyde 3-phosphate + pyruvate + H(+) = 1-deoxy-D-xylulose 5-phosphate + CO2. Its pathway is metabolic intermediate biosynthesis; 1-deoxy-D-xylulose 5-phosphate biosynthesis; 1-deoxy-D-xylulose 5-phosphate from D-glyceraldehyde 3-phosphate and pyruvate: step 1/1. Its function is as follows. Catalyzes the acyloin condensation reaction between C atoms 2 and 3 of pyruvate and glyceraldehyde 3-phosphate to yield 1-deoxy-D-xylulose-5-phosphate (DXP). The polypeptide is 1-deoxy-D-xylulose-5-phosphate synthase (Rhodopseudomonas palustris (strain BisB5)).